The chain runs to 243 residues: Orotidine 5'-phosphate decarboxylase (243 aa).

Residues Asp-18, Lys-39, 66-75, Thr-130, Arg-192, Gln-201, Gly-221, and Arg-222 contribute to the substrate site; that span reads DLKFHDIPTT. Lys-68 (proton donor) is an active-site residue.

Belongs to the OMP decarboxylase family. Type 1 subfamily. Homodimer.

It catalyses the reaction orotidine 5'-phosphate + H(+) = UMP + CO2. The protein operates within pyrimidine metabolism; UMP biosynthesis via de novo pathway; UMP from orotate: step 2/2. Its function is as follows. Catalyzes the decarboxylation of orotidine 5'-monophosphate (OMP) to uridine 5'-monophosphate (UMP). In Synechococcus sp. (strain CC9311), this protein is Orotidine 5'-phosphate decarboxylase.